A 180-amino-acid polypeptide reads, in one-letter code: MANALKEKYVNEVQPALIEKFNFKSSMQAPKIDKIVLNMGVGDAVSNSKNLDEAVEELKLIAGQQPVITKAKKSIAGFRLREGMSIGTKVTLRGERMYDFLDKLINISLPRVRDFRGVSSKAFDGRGNYTLGIREQLIFPEIDFDKVNRVRGLDIVIVTTAQNDEEGRELLTQMGMPFAK.

It belongs to the universal ribosomal protein uL5 family. As to quaternary structure, part of the 50S ribosomal subunit; part of the 5S rRNA/L5/L18/L25 subcomplex. Contacts the 5S rRNA and the P site tRNA. Forms a bridge to the 30S subunit in the 70S ribosome.

Functionally, this is one of the proteins that bind and probably mediate the attachment of the 5S RNA into the large ribosomal subunit, where it forms part of the central protuberance. In the 70S ribosome it contacts protein S13 of the 30S subunit (bridge B1b), connecting the 2 subunits; this bridge is implicated in subunit movement. Contacts the P site tRNA; the 5S rRNA and some of its associated proteins might help stabilize positioning of ribosome-bound tRNAs. This is Large ribosomal subunit protein uL5 from Leuconostoc mesenteroides subsp. mesenteroides (strain ATCC 8293 / DSM 20343 / BCRC 11652 / CCM 1803 / JCM 6124 / NCDO 523 / NBRC 100496 / NCIMB 8023 / NCTC 12954 / NRRL B-1118 / 37Y).